The following is a 569-amino-acid chain: Tetratricopeptide repeat protein 22 (569 aa).

7 TPR repeats span residues 66–99, 101–133, 203–237, 260–294, 295–328, 383–418, and 432–465; these read PAVR…HPGN, NAWA…MGLA, ATLY…LRQV, KDTF…AKNQ, PPIL…LRDP, FKAY…ALVF, and PELQ…DDAG.

In Homo sapiens (Human), this protein is Tetratricopeptide repeat protein 22 (TTC22).